The chain runs to 252 residues: Flagellar L-ring protein (252 aa).

Residues 1 to 25 (MSKSVPLQRIVLVAALMATGGLAGG) form the signal peptide. Cys26 is lipidated: N-palmitoyl cysteine. A lipid anchor (S-diacylglycerol cysteine) is attached at Cys26.

It belongs to the FlgH family. In terms of assembly, the basal body constitutes a major portion of the flagellar organelle and consists of four rings (L,P,S, and M) mounted on a central rod.

Its subcellular location is the cell outer membrane. It is found in the bacterial flagellum basal body. Its function is as follows. Assembles around the rod to form the L-ring and probably protects the motor/basal body from shearing forces during rotation. This chain is Flagellar L-ring protein, found in Rhodopseudomonas palustris (strain ATCC BAA-98 / CGA009).